The sequence spans 163 residues: RNA pyrophosphohydrolase (163 aa).

A Nudix hydrolase domain is found at 6–149 (GYRLNVGIVI…KRDVYRQVMK (144 aa)). The Nudix box motif lies at 38 to 59 (GGIHLTESPEEAMYRELFEELG).

Belongs to the Nudix hydrolase family. RppH subfamily. A divalent metal cation serves as cofactor.

Accelerates the degradation of transcripts by removing pyrophosphate from the 5'-end of triphosphorylated RNA, leading to a more labile monophosphorylated state that can stimulate subsequent ribonuclease cleavage. The polypeptide is RNA pyrophosphohydrolase (Hamiltonella defensa subsp. Acyrthosiphon pisum (strain 5AT)).